Consider the following 652-residue polypeptide: DNA ligase (652 aa).

NAD(+) contacts are provided by residues 30–34 (DEVYD), 79–80 (SL), and Glu108. The active-site N6-AMP-lysine intermediate is the Lys110. Residues Arg131, Glu165, Lys280, and Lys304 each contribute to the NAD(+) site. Zn(2+) contacts are provided by Cys398, Cys401, Cys414, and Cys419. A BRCT domain is found at 574–652 (AKENPFKGKS…DEMRSKIEQA (79 aa)).

Belongs to the NAD-dependent DNA ligase family. LigA subfamily. It depends on Mg(2+) as a cofactor. Mn(2+) is required as a cofactor.

It carries out the reaction NAD(+) + (deoxyribonucleotide)n-3'-hydroxyl + 5'-phospho-(deoxyribonucleotide)m = (deoxyribonucleotide)n+m + AMP + beta-nicotinamide D-nucleotide.. Its function is as follows. DNA ligase that catalyzes the formation of phosphodiester linkages between 5'-phosphoryl and 3'-hydroxyl groups in double-stranded DNA using NAD as a coenzyme and as the energy source for the reaction. It is essential for DNA replication and repair of damaged DNA. The polypeptide is DNA ligase (Sulfurimonas denitrificans (strain ATCC 33889 / DSM 1251) (Thiomicrospira denitrificans (strain ATCC 33889 / DSM 1251))).